The primary structure comprises 96 residues: Evasin P1074 (96 aa).

Positions 1–28 are cleaved as a signal peptide; sequence MAFNMITFLQMAVFVVILFNINLHSASA. Intrachain disulfides connect Cys48-Cys67, Cys52-Cys69, and Cys63-Cys80. An N-linked (GlcNAc...) asparagine glycan is attached at Asn74.

It is found in the secreted. Its function is as follows. Salivary chemokine-binding protein which binds to host chemokines CXCL1 and CXCL8. This is Evasin P1074 from Ixodes ricinus (Common tick).